The following is a 76-amino-acid chain: MKTYSFFVLFIVFIFFISSSKSHSKKHVRFLCATKAVKHIRKVCPDMCLTGEEVEVNEFCKMGYSDSQIKYICCPE.

A signal peptide spans 1 to 24; that stretch reads MKTYSFFVLFIVFIFFISSSKSHS. Cystine bridges form between Cys32-Cys60, Cys44-Cys73, and Cys48-Cys74.

Belongs to the insulin family.

The protein resides in the secreted. This Caenorhabditis elegans protein is Probable insulin-like peptide alpha-type 1 (ins-21).